Here is a 324-residue protein sequence, read N- to C-terminus: Concanavalin B (324 aa).

An N-terminal signal peptide occupies residues 1-25 (MGCERKALILMVVIWIMSFWTLSLA). A GH18 domain is found at 30 to 311 (TEIAVYWGQR…TNIIRYLNAT (282 aa)). A glycan (N-linked (GlcNAc...) asparagine) is linked at Asn309.

Belongs to the glycosyl hydrolase 18 family.

Functionally, may act as a carbohydrate-binding protein. In Canavalia ensiformis (Jack bean), this protein is Concanavalin B.